The sequence spans 146 residues: Hemoglobin subunit beta (146 aa).

V1 is subject to N-acetylvaline. The 145-residue stretch at 2–146 folds into the Globin domain; that stretch reads HLTAEEKAAV…VANALAHKYH (145 aa). T12 bears the Phosphothreonine mark. S44 is subject to Phosphoserine. K59 is subject to N6-acetyllysine. Residue H63 coordinates heme b. At K82 the chain carries N6-acetyllysine. Residue H92 coordinates heme b. C93 is modified (S-nitrosocysteine). K144 bears the N6-acetyllysine mark.

Belongs to the globin family. In terms of assembly, heterotetramer of two alpha chains and two beta chains. In terms of tissue distribution, red blood cells.

Functionally, involved in oxygen transport from the lung to the various peripheral tissues. This chain is Hemoglobin subunit beta (HBB), found in Mellivora capensis (Ratel).